The following is a 252-amino-acid chain: Imidazole glycerol phosphate synthase subunit HisF (252 aa).

Catalysis depends on residues D11 and D130.

This sequence belongs to the HisA/HisF family. As to quaternary structure, heterodimer of HisH and HisF.

It localises to the cytoplasm. The catalysed reaction is 5-[(5-phospho-1-deoxy-D-ribulos-1-ylimino)methylamino]-1-(5-phospho-beta-D-ribosyl)imidazole-4-carboxamide + L-glutamine = D-erythro-1-(imidazol-4-yl)glycerol 3-phosphate + 5-amino-1-(5-phospho-beta-D-ribosyl)imidazole-4-carboxamide + L-glutamate + H(+). It functions in the pathway amino-acid biosynthesis; L-histidine biosynthesis; L-histidine from 5-phospho-alpha-D-ribose 1-diphosphate: step 5/9. IGPS catalyzes the conversion of PRFAR and glutamine to IGP, AICAR and glutamate. The HisF subunit catalyzes the cyclization activity that produces IGP and AICAR from PRFAR using the ammonia provided by the HisH subunit. The protein is Imidazole glycerol phosphate synthase subunit HisF of Hyphomonas neptunium (strain ATCC 15444).